The chain runs to 206 residues: Uridine kinase (206 aa).

An ATP-binding site is contributed by 11-18 (GGSASGKT).

This sequence belongs to the uridine kinase family.

It is found in the cytoplasm. It catalyses the reaction uridine + ATP = UMP + ADP + H(+). The enzyme catalyses cytidine + ATP = CMP + ADP + H(+). It functions in the pathway pyrimidine metabolism; CTP biosynthesis via salvage pathway; CTP from cytidine: step 1/3. Its pathway is pyrimidine metabolism; UMP biosynthesis via salvage pathway; UMP from uridine: step 1/1. This Lactococcus lactis subsp. cremoris (strain MG1363) protein is Uridine kinase.